The sequence spans 350 residues: Hydroxymethylglutaryl-CoA synthase (350 aa).

(3S)-3-hydroxy-3-methylglutaryl-CoA contacts are provided by D33 and V34. E85 (proton donor/acceptor) is an active-site residue. (3S)-3-hydroxy-3-methylglutaryl-CoA contacts are provided by C117 and T158. C117 acts as the Acyl-thioester intermediate in catalysis. R204 is a CoA binding site. (3S)-3-hydroxy-3-methylglutaryl-CoA-binding residues include T206 and H239. The Proton donor/acceptor role is filled by H239. K244 contacts CoA. Positions 248, 271, and 301 each coordinate (3S)-3-hydroxy-3-methylglutaryl-CoA.

It belongs to the thiolase-like superfamily. Archaeal HMG-CoA synthase family. As to quaternary structure, interacts with acetoacetyl-CoA thiolase that catalyzes the precedent step in the pathway and with a DUF35 protein. The acetoacetyl-CoA thiolase/HMG-CoA synthase complex channels the intermediate via a fused CoA-binding site, which allows for efficient coupling of the endergonic thiolase reaction with the exergonic HMGCS reaction.

It catalyses the reaction acetoacetyl-CoA + acetyl-CoA + H2O = (3S)-3-hydroxy-3-methylglutaryl-CoA + CoA + H(+). It participates in metabolic intermediate biosynthesis; (R)-mevalonate biosynthesis; (R)-mevalonate from acetyl-CoA: step 2/3. Functionally, catalyzes the condensation of acetyl-CoA with acetoacetyl-CoA to form 3-hydroxy-3-methylglutaryl-CoA (HMG-CoA). Functions in the mevalonate (MVA) pathway leading to isopentenyl diphosphate (IPP), a key precursor for the biosynthesis of isoprenoid compounds that are building blocks of archaeal membrane lipids. This Methanopyrus kandleri (strain AV19 / DSM 6324 / JCM 9639 / NBRC 100938) protein is Hydroxymethylglutaryl-CoA synthase.